Reading from the N-terminus, the 248-residue chain is Exosome complex component Rrp41 (248 aa).

Belongs to the RNase PH family. Rrp41 subfamily. Component of the archaeal exosome complex. Forms a hexameric ring-like arrangement composed of 3 Rrp41-Rrp42 heterodimers. The hexameric ring associates with a trimer of Rrp4 and/or Csl4 subunits.

It is found in the cytoplasm. In terms of biological role, catalytic component of the exosome, which is a complex involved in RNA degradation. Has 3'-&gt;5' exoribonuclease activity. Can also synthesize heteromeric RNA-tails. This is Exosome complex component Rrp41 from Thermoplasma acidophilum (strain ATCC 25905 / DSM 1728 / JCM 9062 / NBRC 15155 / AMRC-C165).